The sequence spans 866 residues: Probable beta-glucosidase F (866 aa).

Residues 1–20 (MAAFPAYLALLSYLVPGALS) form the signal peptide. Residues Asn65, Asn73, and Asn257 are each glycosylated (N-linked (GlcNAc...) asparagine). The active site involves Asp285. Residues Asn328, Asn360, Asn395, Asn421, Asn474, Asn659, Asn664, and Asn724 are each glycosylated (N-linked (GlcNAc...) asparagine). Residues 725-748 (SSKTYPYPDGYTTEPKPAPRAGGA) are disordered.

The protein belongs to the glycosyl hydrolase 3 family.

It localises to the secreted. The catalysed reaction is Hydrolysis of terminal, non-reducing beta-D-glucosyl residues with release of beta-D-glucose.. It functions in the pathway glycan metabolism; cellulose degradation. Its function is as follows. Beta-glucosidases are one of a number of cellulolytic enzymes involved in the degradation of cellulosic biomass. Catalyzes the last step releasing glucose from the inhibitory cellobiose. This is Probable beta-glucosidase F (bglF) from Aspergillus oryzae (strain ATCC 42149 / RIB 40) (Yellow koji mold).